Here is a 319-residue protein sequence, read N- to C-terminus: Acetyl-coenzyme A carboxylase carboxyl transferase subunit alpha (319 aa).

One can recognise a CoA carboxyltransferase C-terminal domain in the interval 35-296 (NLDEEVQRLR…KAQLLIDLAE (262 aa)).

Belongs to the AccA family. As to quaternary structure, acetyl-CoA carboxylase is a heterohexamer composed of biotin carboxyl carrier protein (AccB), biotin carboxylase (AccC) and two subunits each of ACCase subunit alpha (AccA) and ACCase subunit beta (AccD).

It is found in the cytoplasm. The enzyme catalyses N(6)-carboxybiotinyl-L-lysyl-[protein] + acetyl-CoA = N(6)-biotinyl-L-lysyl-[protein] + malonyl-CoA. The protein operates within lipid metabolism; malonyl-CoA biosynthesis; malonyl-CoA from acetyl-CoA: step 1/1. Functionally, component of the acetyl coenzyme A carboxylase (ACC) complex. First, biotin carboxylase catalyzes the carboxylation of biotin on its carrier protein (BCCP) and then the CO(2) group is transferred by the carboxyltransferase to acetyl-CoA to form malonyl-CoA. In Photorhabdus laumondii subsp. laumondii (strain DSM 15139 / CIP 105565 / TT01) (Photorhabdus luminescens subsp. laumondii), this protein is Acetyl-coenzyme A carboxylase carboxyl transferase subunit alpha.